Consider the following 85-residue polypeptide: Large ribosomal subunit protein bL27 (85 aa).

The disordered stretch occupies residues 1 to 23 (MAHKKGQGSTQNNRDSAGRRLGV).

It belongs to the bacterial ribosomal protein bL27 family.

The chain is Large ribosomal subunit protein bL27 from Helicobacter hepaticus (strain ATCC 51449 / 3B1).